The chain runs to 1023 residues: Rho GTPase-activating protein 11A (1023 aa).

The region spanning 49 to 239 (VPFNALPHSA…TLIDYASDIG (191 aa)) is the Rho-GAP domain. At serine 285 the chain carries Phosphoserine. Threonine 306 carries the phosphothreonine modification. 2 positions are modified to phosphoserine: serine 316 and serine 318. The residue at position 323 (threonine 323) is a Phosphothreonine. A phosphoserine mark is found at serine 339, serine 340, and serine 484. Phosphothreonine is present on threonine 508. A disordered region spans residues 567–589 (TPSNLNNKHNSNITSSPLSGDEN). A phosphoserine mark is found at serine 582, serine 585, serine 638, and serine 675. Residues 714–734 (KQEFSSDEEIKKQQSPKDKLN) are disordered. Residues 721 to 734 (EEIKKQQSPKDKLN) show a composition bias toward basic and acidic residues. Serine 847 is subject to Phosphoserine. Phosphothreonine is present on threonine 866. Serine 868 carries the phosphoserine modification. The segment at 999–1023 (AWYKGSPKHPIGKTQLLPTSKPVDL) is disordered.

Its subcellular location is the nucleus. In terms of biological role, GTPase activator for the Rho-type GTPases by converting them to an inactive GDP-bound state. In Homo sapiens (Human), this protein is Rho GTPase-activating protein 11A.